The sequence spans 428 residues: D-amino acid dehydrogenase (428 aa).

3 to 17 (VVILGSGVVGVASAY) contacts FAD.

Belongs to the DadA oxidoreductase family. It depends on FAD as a cofactor.

The enzyme catalyses a D-alpha-amino acid + A + H2O = a 2-oxocarboxylate + AH2 + NH4(+). It functions in the pathway amino-acid degradation; D-alanine degradation; NH(3) and pyruvate from D-alanine: step 1/1. Its function is as follows. Oxidative deamination of D-amino acids. The sequence is that of D-amino acid dehydrogenase from Burkholderia vietnamiensis (strain G4 / LMG 22486) (Burkholderia cepacia (strain R1808)).